The chain runs to 390 residues: Chitinase-3-like protein 2 (390 aa).

Positions 1–26 (MGATTMDQKSLWAGVVVLLLLQGGSA) are cleaved as a signal peptide. One can recognise a GH18 domain in the interval 27-390 (YKLVCYFTNW…QAVKRSLGSL (364 aa)). An intrachain disulfide couples cysteine 31 to cysteine 56. Residue asparagine 35 is glycosylated (N-linked (GlcNAc...) asparagine). Chitin is bound by residues 75–76 (DK), 102–105 (GGYL), tyrosine 104, tyrosine 146, 210–213 (LSFD), aspartate 213, and tryptophan 360.

It belongs to the glycosyl hydrolase 18 family. Highest expression in chondrocytes, followed by synoviocytes, lung and heart. Not detected in spleen, pancreas, and liver. May also be expressed in developing brain and placenta.

The protein localises to the secreted. Its function is as follows. Lectin that binds chitooligosaccharides and other glycans with high affinity, but not heparin. Has no chitinase activity. The protein is Chitinase-3-like protein 2 (CHI3L2) of Homo sapiens (Human).